The sequence spans 1158 residues: ATP-dependent helicase/deoxyribonuclease subunit B (1158 aa).

The 275-residue stretch at 1-275 (MTLHAYLGRA…QYFNQLYRFN (275 aa)) folds into the UvrD-like helicase ATP-binding domain. 8–15 (GRAGTGKS) is a binding site for ATP. One can recognise a UvrD-like helicase C-terminal domain in the interval 269–583 (NQLYRFNNQD…SIGTMDLAKV (315 aa)). 4 residues coordinate [4Fe-4S] cluster: Cys-784, Cys-1112, Cys-1115, and Cys-1121.

This sequence belongs to the helicase family. AddB/RexB type 1 subfamily. Heterodimer of AddA and AddB. Mg(2+) is required as a cofactor. Requires [4Fe-4S] cluster as cofactor.

The heterodimer acts as both an ATP-dependent DNA helicase and an ATP-dependent, dual-direction single-stranded exonuclease. Recognizes the chi site generating a DNA molecule suitable for the initiation of homologous recombination. The AddB subunit has 5' -&gt; 3' nuclease activity but not helicase activity. The sequence is that of ATP-dependent helicase/deoxyribonuclease subunit B from Staphylococcus aureus (strain USA300).